A 453-amino-acid polypeptide reads, in one-letter code: Putative ABC transporter ATP-binding protein MM_0462 (453 aa).

In terms of domain architecture, ABC transporter spans 4–239; that stretch reads LETRSLKYSY…QELLKKVGLR (236 aa). Position 37 to 44 (37 to 44) interacts with ATP; the sequence is GQNGSGKS.

It belongs to the ABC transporter superfamily.

It is found in the cell membrane. Probably part of an ABC transporter complex. Responsible for energy coupling to the transport system. This is Putative ABC transporter ATP-binding protein MM_0462 from Methanosarcina mazei (strain ATCC BAA-159 / DSM 3647 / Goe1 / Go1 / JCM 11833 / OCM 88) (Methanosarcina frisia).